The following is a 224-amino-acid chain: Magnesium-protoporphyrin O-methyltransferase (224 aa).

It belongs to the class I-like SAM-binding methyltransferase superfamily. Magnesium protoporphyrin O-methyltransferase family.

It catalyses the reaction Mg-protoporphyrin IX + S-adenosyl-L-methionine = Mg-protoporphyrin IX 13-monomethyl ester + S-adenosyl-L-homocysteine. The protein operates within porphyrin-containing compound metabolism; bacteriochlorophyll biosynthesis (light-independent). Converts Mg-protoporphyrin IX to Mg-protoporphyrin IX methylester using S-adenosyl-L-methionine as a cofactor. The sequence is that of Magnesium-protoporphyrin O-methyltransferase (bchM) from Rhodobacter capsulatus (Rhodopseudomonas capsulata).